The chain runs to 252 residues: 3-deoxy-manno-octulosonate cytidylyltransferase (252 aa).

This sequence belongs to the KdsB family.

It is found in the cytoplasm. It catalyses the reaction 3-deoxy-alpha-D-manno-oct-2-ulosonate + CTP = CMP-3-deoxy-beta-D-manno-octulosonate + diphosphate. It participates in nucleotide-sugar biosynthesis; CMP-3-deoxy-D-manno-octulosonate biosynthesis; CMP-3-deoxy-D-manno-octulosonate from 3-deoxy-D-manno-octulosonate and CTP: step 1/1. Its pathway is bacterial outer membrane biogenesis; lipopolysaccharide biosynthesis. Functionally, activates KDO (a required 8-carbon sugar) for incorporation into bacterial lipopolysaccharide in Gram-negative bacteria. The sequence is that of 3-deoxy-manno-octulosonate cytidylyltransferase from Phocaeicola vulgatus (strain ATCC 8482 / DSM 1447 / JCM 5826 / CCUG 4940 / NBRC 14291 / NCTC 11154) (Bacteroides vulgatus).